A 62-amino-acid polypeptide reads, in one-letter code: DNA-binding protein 7 (62 aa).

Belongs to the 7 kDa DNA-binding/endoribonuclease P2 family. In terms of assembly, monomer.

Its subcellular location is the cytoplasm. In terms of biological role, can constrain negative DNA supercoils. May be involved in maintaining the integrity of the genome at high temperature. This is DNA-binding protein 7 from Metallosphaera sedula (strain ATCC 51363 / DSM 5348 / JCM 9185 / NBRC 15509 / TH2).